We begin with the raw amino-acid sequence, 234 residues long: Synaptogyrin-1 (234 aa).

Methionine 1 is subject to N-acetylmethionine. At methionine 1–glutamine 23 the chain is on the cytoplasmic side. Residues leucine 20–glutamine 173 enclose the MARVEL domain. Residues proline 24 to valine 44 form a helical membrane-spanning segment. Residues asparagine 45–glycine 71 are Lumenal-facing. Residues valine 72–phenylalanine 92 traverse the membrane as a helical segment. At proline 93–alanine 104 the chain is on the cytoplasmic side. A helical membrane pass occupies residues valine 105–phenylalanine 125. Topologically, residues leucine 126–arginine 148 are lumenal. A helical transmembrane segment spans residues alanine 149–phenylalanine 169. Topologically, residues glutamine 170–tyrosine 234 are cytoplasmic. Residues glutamate 201–tyrosine 234 form a disordered region.

This sequence belongs to the synaptogyrin family. In terms of tissue distribution, nervous system (at protein level).

Its subcellular location is the cytoplasmic vesicle. The protein localises to the secretory vesicle. The protein resides in the synaptic vesicle membrane. It localises to the melanosome. May play a role in regulated exocytosis. Modulates the localization of synaptophysin/SYP into synaptic-like microvesicles and may therefore play a role in synaptic-like microvesicle formation and/or maturation. Involved in the regulation of short-term and long-term synaptic plasticity. This Rattus norvegicus (Rat) protein is Synaptogyrin-1.